The following is a 164-amino-acid chain: Phosphopantetheine adenylyltransferase (164 aa).

Ser10 is a binding site for substrate. Residues 10–11 (SF) and His18 contribute to the ATP site. Substrate contacts are provided by Lys42, Leu74, and Arg88. ATP is bound by residues 89–91 (GLR), Glu99, and 124–130 (YSFLSSS).

Belongs to the bacterial CoaD family. In terms of assembly, homohexamer. It depends on Mg(2+) as a cofactor.

The protein resides in the cytoplasm. The catalysed reaction is (R)-4'-phosphopantetheine + ATP + H(+) = 3'-dephospho-CoA + diphosphate. It participates in cofactor biosynthesis; coenzyme A biosynthesis; CoA from (R)-pantothenate: step 4/5. Its function is as follows. Reversibly transfers an adenylyl group from ATP to 4'-phosphopantetheine, yielding dephospho-CoA (dPCoA) and pyrophosphate. The chain is Phosphopantetheine adenylyltransferase from Bacillus licheniformis (strain ATCC 14580 / DSM 13 / JCM 2505 / CCUG 7422 / NBRC 12200 / NCIMB 9375 / NCTC 10341 / NRRL NRS-1264 / Gibson 46).